We begin with the raw amino-acid sequence, 501 residues long: Tetrachloroethene reductive dehalogenase (501 aa).

A signal peptide (tat-type signal) is located at residues 1 to 37 (MEKKKKPELSRRDFGKLIIGGGAAATIAPFGVPGANA). Corrinoid-binding positions include Ala74, Tyr207, 309–314 (NGVGQS), 329–332 (MGAC), and 341–343 (VRL). In terms of domain architecture, 4Fe-4S ferredoxin-type 1 spans 356 to 386 (KPIDFGVTEFCETCKKCARECPSKAITEGPR). Residues Cys366, Cys369, Cys372, and Cys376 each coordinate [4Fe-4S] cluster. 394–401 (HNQSGKLQ) is a binding site for corrinoid. A [4Fe-4S] cluster-binding site is contributed by Cys409. Tyr419 provides a ligand contact to corrinoid. Residues Cys420, Cys423, and Cys427 each coordinate [4Fe-4S] cluster. The 20-residue stretch at 420 to 439 (CGVCVAVCPFTKGNIWIHDG) folds into the 4Fe-4S ferredoxin-type 2 domain.

It belongs to the PceA family. In terms of assembly, monomer. [4Fe-4S] cluster serves as cofactor. It depends on corrinoid as a cofactor. Predicted to be exported by the Tat system. The position of the signal peptide cleavage has not been experimentally proven.

It is found in the cytoplasm. The protein localises to the cell inner membrane. It carries out the reaction trichloroethene + chloride + A + H(+) = tetrachloroethene + AH2. It catalyses the reaction trichloroethene + AH2 = (Z)-1,2-dichloroethene + chloride + A + H(+). Both the processed and unprocessed enzymes are catalytically active. PCE-dependent growth and PceA activity are inhibited in the presence of high concentrations of 5,6-dimethylbenzimidazole (DMB), probably due to the formation a DMB-containing nor-B12 cofactor. Dechlorination of PCE is stimulated by ammonium ions. Activity is inhibited by chlorinated methanes. In terms of biological role, catalyzes the reductive dechlorination of tetrachloroethene (PCE) to trichloroethene (TCE) and of trichloroethene to cis-1,2-dichloroethene (DCE). In addition, trans-1,3-dichloropropene, 1,1,3-trichloropropene and 2,3-dichloropropene are reduced to a mixture of mono-chloropropenes, 1,1-dichloropropene, and 2-chloropropene, respectively. Is also able to convert brominated phenols such as 4-bromophenol (4-BP), 2,4-dibromophenol (2,4-DBP) and 2,4,6-tribromophenol (2,4,6-TBP). Utilizes formate or pyruvate as electron donors. Titanium(III) citrate could also serve as electron donor. Reduced methyl viologen can act as the artificial electron donor. This chain is Tetrachloroethene reductive dehalogenase, found in Sulfurospirillum multivorans (Dehalospirillum multivorans).